Here is a 529-residue protein sequence, read N- to C-terminus: Bifunctional purine biosynthesis protein PurH (529 aa).

An MGS-like domain is found at 1–148 (MQQRRPVRRA…KNHKDVAIVV (148 aa)). Lys-287 is modified (N6-acetyllysine).

The protein belongs to the PurH family.

It carries out the reaction (6R)-10-formyltetrahydrofolate + 5-amino-1-(5-phospho-beta-D-ribosyl)imidazole-4-carboxamide = 5-formamido-1-(5-phospho-D-ribosyl)imidazole-4-carboxamide + (6S)-5,6,7,8-tetrahydrofolate. The catalysed reaction is IMP + H2O = 5-formamido-1-(5-phospho-D-ribosyl)imidazole-4-carboxamide. It functions in the pathway purine metabolism; IMP biosynthesis via de novo pathway; 5-formamido-1-(5-phospho-D-ribosyl)imidazole-4-carboxamide from 5-amino-1-(5-phospho-D-ribosyl)imidazole-4-carboxamide (10-formyl THF route): step 1/1. Its pathway is purine metabolism; IMP biosynthesis via de novo pathway; IMP from 5-formamido-1-(5-phospho-D-ribosyl)imidazole-4-carboxamide: step 1/1. The protein is Bifunctional purine biosynthesis protein PurH of Escherichia coli O45:K1 (strain S88 / ExPEC).